The primary structure comprises 96 residues: SAGA complex subunit SUS1 (96 aa).

A Glycyl lysine isopeptide (Lys-Gly) (interchain with G-Cter in ubiquitin) cross-link involves residue K68.

It belongs to the ENY2 family. As to quaternary structure, component of the 1.8 MDa SAGA (Spt-Ada-Gcn5 acetyltransferase) complex, which is composed of 19 subunits TRA1, SPT7, TAF5, NGG1/ADA3, SGF73, SPT20/ADA5, SPT8, TAF12, TAF6, HFI1/ADA1, UBP8, GCN5, ADA2, SPT3, SGF29, TAF10, TAF9, SGF11 and SUS1. The SAGA complex is composed of 4 modules, namely the HAT (histone acetyltransferase) module (GCN5, ADA2, NGG1/ADA3 and SGF29), the DUB (deubiquitinating) module (UBP8, SGF11, SGF73 and SUS1), the core or TAF (TBP-associated factor) module (TAF5, TAF6, TAF9, TAF10 and TAF12), and the Tra1 or SPT (Suppressor of Ty) module (TRA1, HFI1/ADA1, SPT3, SPT7, SPT8 and SPT20/ADA5). The Tra1/SPT module binds activators, the core module recruits TBP (TATA-binding protein), the HAT module contains the histone H3 acetyltransferase GCN5, and the DUB module comprises the histone H2B deubiquitinase UBP8. Also identified in an altered form of SAGA, named SALSA (SAGA altered, Spt8 absent) or SLIK (SAGA-like) complex, which contains a C-terminal truncated form of SPT7 and is missing SPT8. However, it has been shown that the SAGA and SAGA-like SALSA/SLIK transcriptional coactivators are structurally and biochemically equivalent. Component of the nuclear pore complex (NPC)-associated TREX-2 complex (transcription and export complex 2), composed of at least SUS1, SAC3, THP1, SEM1, and CDC31. TREX-2 contains 2 SUS1 chains. The TREX-2 complex interacts with the mRNA export factors MEX67, MTR2 and SUB2, and the nucleoporin NUP1. Interacts directly with THP1, SAC3. Interacts directly with SGF11 and UBP8. Interacts with YRA1, MEX67 and with the RNA polymerase II.

Its subcellular location is the nucleus. The protein resides in the nucleoplasm. It localises to the cytoplasm. It is found in the P-body. In terms of biological role, involved in mRNA export coupled transcription activation by association with both the TREX-2 and the SAGA complexes. SAGA acts as a general cofactor required for essentially all RNA polymerase II transcription. At the promoters, SAGA is required for transcription pre-initiation complex (PIC) recruitment. It influences RNA polymerase II transcriptional activity through different activities such as TBP interaction (via core/TAF module) and promoter selectivity, interaction with transcription activators (via Tra1/SPT module), and chromatin modification through histone acetylation (via HAT module) and deubiquitination (via DUB module). SAGA preferentially acetylates histones H3 (to form H3K9ac, H3K14ac, H3K18ac and H3K23ac) and H2B and deubiquitinates histone H2B. SAGA interacts with DNA via upstream activating sequences (UASs). Also identified in a modified version of SAGA named SALSA or SLIK. The cleavage of SPT7 and the absence of the SPT8 subunit in SLIK neither drive any major conformational differences in its structure compared with SAGA, nor significantly affect HAT, DUB, or DNA-binding activities. Within the SAGA complex, participates in a subcomplex with SGF11, SGF73 and UBP8 required for deubiquitination of H2B and for the maintenance of steady-state H3 methylation levels. The TREX-2 complex functions in docking export-competent ribonucleoprotein particles (mRNPs) to the nuclear entrance of the nuclear pore complex (nuclear basket), by association with components of the nuclear mRNA export machinery (MEX67-MTR2 and SUB2) in the nucleoplasm and the nucleoporin NUP1 at the nuclear basket. TREX-2 participates in mRNA export and accurate chromatin positioning in the nucleus by tethering genes to the nuclear periphery. SUS1 also has a role in mRNP biogenesis and maintenance of genome integrity through preventing RNA-mediated genome instability. Has a role in response to DNA damage induced by methyl methane sulfonate (MMS) and replication arrest induced by hydroxyurea. May also be involved in cytoplasmic mRNA decay by interaction with components of P-bodies. This Saccharomyces cerevisiae (strain ATCC 204508 / S288c) (Baker's yeast) protein is SAGA complex subunit SUS1.